The sequence spans 277 residues: Shikimate dehydrogenase (NADP(+)) (277 aa).

Residues 15-17 (SKS) and threonine 62 each bind shikimate. The active-site Proton acceptor is the lysine 66. Glutamate 78 serves as a coordination point for NADP(+). Shikimate-binding residues include asparagine 87 and aspartate 103. NADP(+)-binding positions include 127–131 (GAGGA), 151–156 (NRTHEK), and glycine 238.

This sequence belongs to the shikimate dehydrogenase family. In terms of assembly, homodimer.

It catalyses the reaction shikimate + NADP(+) = 3-dehydroshikimate + NADPH + H(+). Its pathway is metabolic intermediate biosynthesis; chorismate biosynthesis; chorismate from D-erythrose 4-phosphate and phosphoenolpyruvate: step 4/7. Functionally, involved in the biosynthesis of the chorismate, which leads to the biosynthesis of aromatic amino acids. Catalyzes the reversible NADPH linked reduction of 3-dehydroshikimate (DHSA) to yield shikimate (SA). This is Shikimate dehydrogenase (NADP(+)) from Shewanella frigidimarina (strain NCIMB 400).